A 434-amino-acid polypeptide reads, in one-letter code: Serine/threonine transporter SstT (434 aa).

Transmembrane regions (helical) follow at residues 14–34 (IVIG…WSFI), 41–61 (FVGA…MSAI), 72–92 (FGTV…AAVA), 135–155 (ALVE…GSGL), 172–192 (TVSA…VGLL), 210–230 (LLML…PFMV), 282–302 (ISIP…VSIM), 316–336 (IFLA…VSGI), and 351–371 (FGIS…IGVV). The interval 414–434 (KGTAEVVTPEKANEAEESEQV) is disordered.

The protein belongs to the dicarboxylate/amino acid:cation symporter (DAACS) (TC 2.A.23) family.

It is found in the cell membrane. The catalysed reaction is L-serine(in) + Na(+)(in) = L-serine(out) + Na(+)(out). It catalyses the reaction L-threonine(in) + Na(+)(in) = L-threonine(out) + Na(+)(out). Functionally, involved in the import of serine and threonine into the cell, with the concomitant import of sodium (symport system). The chain is Serine/threonine transporter SstT from Lacticaseibacillus paracasei (strain ATCC 334 / BCRC 17002 / CCUG 31169 / CIP 107868 / KCTC 3260 / NRRL B-441) (Lactobacillus paracasei).